Consider the following 1240-residue polypeptide: DNA-directed RNA polymerase subunit beta (1240 aa).

This sequence belongs to the RNA polymerase beta chain family. In terms of assembly, the RNAP catalytic core consists of 2 alpha, 1 beta, 1 beta' and 1 omega subunit. When a sigma factor is associated with the core the holoenzyme is formed, which can initiate transcription.

The enzyme catalyses RNA(n) + a ribonucleoside 5'-triphosphate = RNA(n+1) + diphosphate. DNA-dependent RNA polymerase catalyzes the transcription of DNA into RNA using the four ribonucleoside triphosphates as substrates. The chain is DNA-directed RNA polymerase subunit beta from Phytoplasma australiense.